Reading from the N-terminus, the 519-residue chain is Aldehyde dehydrogenase X, mitochondrial (519 aa).

The N-terminal 19 residues, 1-19, are a transit peptide targeting the mitochondrion; the sequence is MLTARLLLPRLLCLQGRTT. Position 53 is an N6-acetyllysine (lysine 53). Lysine 54 carries the post-translational modification N6-acetyllysine; alternate. Lysine 54 is subject to N6-succinyllysine; alternate. Lysine 83 is modified (N6-succinyllysine). 264-269 is a binding site for NAD(+); that stretch reads GSTEVG. Glutamate 287 acts as the Proton acceptor in catalysis. Cysteine 321 functions as the Nucleophile in the catalytic mechanism. An N6-acetyllysine; alternate mark is found at lysine 366, lysine 385, lysine 401, lysine 416, and lysine 428. Residues lysine 366, lysine 385, lysine 401, lysine 416, and lysine 428 each carry the N6-succinyllysine; alternate modification. Residue lysine 431 is modified to N6-acetyllysine.

This sequence belongs to the aldehyde dehydrogenase family. In terms of assembly, homotetramer.

The protein resides in the mitochondrion matrix. The catalysed reaction is an aldehyde + NAD(+) + H2O = a carboxylate + NADH + 2 H(+). Its pathway is alcohol metabolism; ethanol degradation; acetate from ethanol: step 2/2. ALDHs play a major role in the detoxification of alcohol-derived acetaldehyde. They are involved in the metabolism of corticosteroids, biogenic amines, neurotransmitters, and lipid peroxidation. The sequence is that of Aldehyde dehydrogenase X, mitochondrial (Aldh1b1) from Mus musculus (Mouse).